The chain runs to 111 residues: Cell cycle protein GpsB (111 aa).

The stretch at Leu-32 to Ser-63 forms a coiled coil. Positions Gln-59–Glu-80 are disordered. Positions Ala-60–Glu-71 are enriched in polar residues.

The protein belongs to the GpsB family. In terms of assembly, forms polymers through the coiled coil domains. Interacts with PBP1, MreC and EzrA.

It is found in the cytoplasm. Its function is as follows. Divisome component that associates with the complex late in its assembly, after the Z-ring is formed, and is dependent on DivIC and PBP2B for its recruitment to the divisome. Together with EzrA, is a key component of the system that regulates PBP1 localization during cell cycle progression. Its main role could be the removal of PBP1 from the cell pole after pole maturation is completed. Also contributes to the recruitment of PBP1 to the division complex. Not essential for septum formation. The polypeptide is Cell cycle protein GpsB (Streptococcus suis (strain 98HAH33)).